The chain runs to 262 residues: Type III pantothenate kinase (262 aa).

ATP is bound at residue 9–16 (DSGNTRVK). Substrate-binding positions include tyrosine 93 and 100–103 (GSDR). The Proton acceptor role is filled by aspartate 102. A K(+)-binding site is contributed by aspartate 122. Threonine 125 serves as a coordination point for ATP. Threonine 175 contributes to the substrate binding site.

This sequence belongs to the type III pantothenate kinase family. Homodimer. NH4(+) is required as a cofactor. The cofactor is K(+).

It localises to the cytoplasm. It catalyses the reaction (R)-pantothenate + ATP = (R)-4'-phosphopantothenate + ADP + H(+). It functions in the pathway cofactor biosynthesis; coenzyme A biosynthesis; CoA from (R)-pantothenate: step 1/5. Functionally, catalyzes the phosphorylation of pantothenate (Pan), the first step in CoA biosynthesis. In Nitrosospira multiformis (strain ATCC 25196 / NCIMB 11849 / C 71), this protein is Type III pantothenate kinase.